Reading from the N-terminus, the 259-residue chain is Type III pantothenate kinase (259 aa).

Residue D6–V13 coordinates ATP. Substrate is bound at residue G107–R110. Catalysis depends on D109, which acts as the Proton acceptor. Residue D129 participates in K(+) binding. T132 is a binding site for ATP. A substrate-binding site is contributed by T184.

It belongs to the type III pantothenate kinase family. As to quaternary structure, homodimer. NH4(+) serves as cofactor. Requires K(+) as cofactor.

The protein resides in the cytoplasm. The enzyme catalyses (R)-pantothenate + ATP = (R)-4'-phosphopantothenate + ADP + H(+). The protein operates within cofactor biosynthesis; coenzyme A biosynthesis; CoA from (R)-pantothenate: step 1/5. Catalyzes the phosphorylation of pantothenate (Pan), the first step in CoA biosynthesis. The protein is Type III pantothenate kinase of Thermomicrobium roseum (strain ATCC 27502 / DSM 5159 / P-2).